The chain runs to 1198 residues: DNA polymerase (1198 aa).

Disordered regions lie at residues 1 to 90 (MALV…TVVA), 179 to 198 (LEQP…QPNP), and 906 to 931 (ALAD…PSGT). A compositionally biased stretch (low complexity) spans 30–40 (QQPPRAAPAPA).

It belongs to the DNA polymerase type-B family. As to quaternary structure, heterodimer with the terminal protein; this heterodimer binds to bp 9 to 18 of the genome. Forms a complex with viral pTP, DBP and hosts NFIA and POU2F1/OCT1 for initiation of replication.

The protein resides in the host nucleus. It carries out the reaction DNA(n) + a 2'-deoxyribonucleoside 5'-triphosphate = DNA(n+1) + diphosphate. In terms of biological role, eukaryotic-type DNA polymerase involved in viral genomic replication. DNA synthesis is protein primed, and acts in a strand displacement replication. Assembles in complex with viral pTP, DBP, host NFIA and host POU2F1/OCT1 on viral origin of replication. The polymerase covalently transfers dCMP onto pTP, thereby initiating complementary strand synthesis. This is DNA polymerase from Homo sapiens (Human).